The primary structure comprises 360 residues: Chorismate synthase (360 aa).

Arg47 is an NADP(+) binding site. FMN contacts are provided by residues Arg124–Ser126, Gly286, Lys301–Thr305, and Arg327.

Belongs to the chorismate synthase family. As to quaternary structure, homotetramer. FMNH2 is required as a cofactor.

The enzyme catalyses 5-O-(1-carboxyvinyl)-3-phosphoshikimate = chorismate + phosphate. The protein operates within metabolic intermediate biosynthesis; chorismate biosynthesis; chorismate from D-erythrose 4-phosphate and phosphoenolpyruvate: step 7/7. Catalyzes the anti-1,4-elimination of the C-3 phosphate and the C-6 proR hydrogen from 5-enolpyruvylshikimate-3-phosphate (EPSP) to yield chorismate, which is the branch point compound that serves as the starting substrate for the three terminal pathways of aromatic amino acid biosynthesis. This reaction introduces a second double bond into the aromatic ring system. The protein is Chorismate synthase of Synechococcus sp. (strain RCC307).